Reading from the N-terminus, the 361-residue chain is MKNLFLFCRAGYEKECAAEIQQRAAELNVGGFVKANNNDAYVVYQCFEEDGGDILVKQLPLDSLIFARQMFAASELLADLPESDRVSPIVAALSDVSKAGELRVETPDTNEAKELSAFCRKFTVPLRQHLKKSGSLLAQENPKRPIIHVCFIGPGRAYVGYSFSNNSSPYFMGIPRLKMAADAPSRSSLKLDEAFAQFVPKEEQEERVRSGMNAVDLGACPGGWTYQLVRRGMMVSAVDNGPMNEKLMETGQVKHFREDGFRFEPQRKNIYWLVCDMVEKPARVAELIEAWAINGWFKEAIFNLKLPMKSRYKEVMAILNTMQEILKENGINEFQLQCKHLYHDRDEVTVHLWIRPSQAWN.

S-adenosyl-L-methionine contacts are provided by residues S187, 220 to 223, D239, D259, and D276; that span reads CPGG. The active-site Proton acceptor is K305.

Belongs to the class I-like SAM-binding methyltransferase superfamily. RNA methyltransferase RlmE family. RlmM subfamily. As to quaternary structure, monomer.

The protein resides in the cytoplasm. It carries out the reaction cytidine(2498) in 23S rRNA + S-adenosyl-L-methionine = 2'-O-methylcytidine(2498) in 23S rRNA + S-adenosyl-L-homocysteine + H(+). Its function is as follows. Catalyzes the 2'-O-methylation at nucleotide C2498 in 23S rRNA. The protein is Ribosomal RNA large subunit methyltransferase M of Shewanella sp. (strain MR-7).